The primary structure comprises 175 residues: MLHRLAFPVMSWMLLSCLMLLSQVQGEDSPKKIPSARISCPKGSQAYGSYCYALFQIPQTWFDAELACQKRPEGHLVSVLNVAEASFLASMVKNTGNSYQYTWIGLHDPTLGGEPNGGGWEWSNNDIMNYVNWERNPSTALDRGFCGSLSRSSGFLRWRDTTCEVKLPYVCKFTG.

A signal peptide spans 1–26 (MLHRLAFPVMSWMLLSCLMLLSQVQG). A propeptide spanning residues 27–37 (EDSPKKIPSAR) is cleaved from the precursor. Cystine bridges form between C40–C51, C68–C171, and C146–C163. A C-type lectin domain is found at 47-172 (YGSYCYALFQ…CEVKLPYVCK (126 aa)). A Zn(2+)-binding site is contributed by H107. The EPN motif lies at 114-116 (EPN). E121 is a binding site for Zn(2+).

In terms of assembly, forms a hexameric membrane-permeabilizing oligomeric pore on membrane phospholipids. The hexamer is formed by three dimers related by helical symmetry. Forms filaments, filamentation traps pore complexes and limits damage to host cells. Interacts with EXTL3. In terms of processing, proteolytic processing by trypsin removes an inhibitory N-terminal propeptide and is essential for peptidoglycan binding and antibacterial activity. In terms of tissue distribution, constitutively expressed in intestine.

The protein localises to the secreted. Lipopolysaccharide inhibits pore-forming activity, explaining why is bactericidal for Gram-positive but not Gram-negative bacteria. Functionally, bactericidal C-type lectin which acts against several intestinal Gram-positive bacteria and Gram-negative bacteria. Lacks antibacterial activity against S.typhimurium. May play a role in protection against infection with S.enteritidis by inhibiting its translocation from the gut lumen into intestinal tissues and further extraintestinal tissues. In terms of biological role, acts as a hormone in response to different stimuli. Secreted by different cell types to activate its receptor EXTL3 and induce cell specific signaling pathways. In pancreas, is able stimulate cell proliferation. This is Regenerating islet-derived protein 3-beta from Rattus norvegicus (Rat).